The chain runs to 85 residues: U4-theraphotoxin-Hhn1a (85 aa).

The N-terminal stretch at 1–22 is a signal peptide; that stretch reads MKVTLIAILTCATVLVLHTTAA. A propeptide spanning residues 23–48 is cleaved from the precursor; it reads EELEAESQLMEVGMPDTELAAVDEER. Intrachain disulfides connect C52–C66, C56–C77, and C71–C82.

It belongs to the neurotoxin 12 (Hwtx-2) family. 02 (Hwtx-2) subfamily. Monomer. Expressed by the venom gland.

It localises to the secreted. Its function is as follows. Neurotoxin active on both insects and mammals. The protein is U4-theraphotoxin-Hhn1a of Cyriopagopus hainanus (Chinese bird spider).